The chain runs to 274 residues: Nickel/cobalt efflux system RcnA (274 aa).

Residues 1-12 lie on the Periplasmic side of the membrane; the sequence is MTEFTTLLQQGN. Residues 13-33 form a helical membrane-spanning segment; that stretch reads AWFFIPSAILLGALHGLEPGH. The Cytoplasmic segment spans residues 34 to 56; that stretch reads SKTMMAAFIIAIKGTIKQAVMLG. The chain crosses the membrane as a helical span at residues 57–77; that stretch reads LAATISHTAVVWLIAFGGMVI. Topologically, residues 78–86 are periplasmic; sequence SKRFTAQSA. Residues 87-107 form a helical membrane-spanning segment; it reads EPWLQLISAVIIISTAFWMFW. At 108-174 the chain is on the cytoplasmic side; it reads RTWRGERNWL…FDGREVTNWQ (67 aa). Over residues 127–137 the composition is skewed to basic and acidic residues; the sequence is HHHHDHEDHHD. The interval 127-153 is disordered; the sequence is HHHHDHEDHHDHGHHHHHEHGEYQDAH. The helical transmembrane segment at 175–195 threads the bilayer; sequence ILLFGLTGGLIPCPAAITVLL. Topologically, residues 196–209 are periplasmic; sequence ICIQLKALTLGATL. A helical membrane pass occupies residues 210 to 230; the sequence is VVSFSLGLALTLVTVSVGAAI. Residues 231–251 lie on the Cytoplasmic side of the membrane; the sequence is SVQQVAKRWSGFNTLAKRAPY. The helical transmembrane segment at 252–272 threads the bilayer; the sequence is FSSLLIGLVGVYMGVHGFMGI. Topologically, residues 273-274 are periplasmic; that stretch reads MR.

It belongs to the NiCoT transporter (TC 2.A.52) family. RcnA subfamily.

The protein resides in the cell inner membrane. Efflux system for nickel and cobalt. The sequence is that of Nickel/cobalt efflux system RcnA (rcnA) from Escherichia coli O6:K15:H31 (strain 536 / UPEC).